Reading from the N-terminus, the 282-residue chain is Nucleotide-binding protein Ping_2894 (282 aa).

8–15 contacts ATP; the sequence is GRSGSGKT. 56 to 59 provides a ligand contact to GTP; it reads DIRN.

The protein belongs to the RapZ-like family.

Its function is as follows. Displays ATPase and GTPase activities. This is Nucleotide-binding protein Ping_2894 from Psychromonas ingrahamii (strain DSM 17664 / CCUG 51855 / 37).